The following is a 94-amino-acid chain: Protein RnfH (94 aa).

This sequence belongs to the UPF0125 (RnfH) family.

This Serratia proteamaculans (strain 568) protein is Protein RnfH.